The sequence spans 381 residues: Acetylornithine deacetylase (381 aa).

Position 79 (His-79) interacts with Zn(2+). Residue Asp-81 is part of the active site. Asp-111 is a Zn(2+) binding site. Glu-143 is a catalytic residue. Residues Glu-144, Glu-168, and His-354 each contribute to the Zn(2+) site.

The protein belongs to the peptidase M20A family. ArgE subfamily. In terms of assembly, homodimer. Requires Zn(2+) as cofactor. It depends on Co(2+) as a cofactor. Glutathione serves as cofactor.

The protein localises to the cytoplasm. The enzyme catalyses N(2)-acetyl-L-ornithine + H2O = L-ornithine + acetate. Its pathway is amino-acid biosynthesis; L-arginine biosynthesis; L-ornithine from N(2)-acetyl-L-ornithine (linear): step 1/1. Functionally, catalyzes the hydrolysis of the amide bond of N(2)-acetylated L-amino acids. Cleaves the acetyl group from N-acetyl-L-ornithine to form L-ornithine, an intermediate in L-arginine biosynthesis pathway, and a branchpoint in the synthesis of polyamines. The sequence is that of Acetylornithine deacetylase from Buchnera aphidicola subsp. Acyrthosiphon pisum (strain 5A).